The sequence spans 68 residues: Large ribosomal subunit protein uL29 (68 aa).

It belongs to the universal ribosomal protein uL29 family.

This Thermoplasma acidophilum (strain ATCC 25905 / DSM 1728 / JCM 9062 / NBRC 15155 / AMRC-C165) protein is Large ribosomal subunit protein uL29 (rpl29).